We begin with the raw amino-acid sequence, 220 residues long: MASERLPNRPACLLVASGAAEGVSAQSFLHCFTMASTAFNLQVATPGGKAMEFVDVTESNARWVQDFRLKAYASPAKLESIDGARYHALLIPSCPGALTDLASSGSLARILQHFHSESKPICAVGHGVAALCCATNEDRSWVFDSYSLTGPSVCELVRAPGFARLPLVVEDFVKDSGACFSASEPDAVHVVLDRHLVTGQNASSTVPAVQNLLFLCGSRK.

An N-terminal signal peptide occupies residues 1 to 38 (MASERLPNRPACLLVASGAAEGVSAQSFLHCFTMASTA). Residue Asn-201 is glycosylated (N-linked (GlcNAc...) asparagine).

This sequence belongs to the peptidase C56 family. In terms of assembly, homotetramer. Component of the FERRY complex composed of five subunits, TBCK, PPP1R21, FERRY3, CRYZL1 and GATD1 with a ratio of 1:2:1:2:4, respectively.

The protein localises to the secreted. Its subcellular location is the early endosome. In terms of biological role, component of the FERRY complex (Five-subunit Endosomal Rab5 and RNA/ribosome intermediary). The FERRY complex directly interacts with mRNAs and RAB5A, and functions as a RAB5A effector involved in the localization and the distribution of specific mRNAs most likely by mediating their endosomal transport. The complex recruits mRNAs and ribosomes to early endosomes through direct mRNA-interaction. The protein is Glutamine amidotransferase-like class 1 domain-containing protein 1 of Homo sapiens (Human).